The following is a 215-amino-acid chain: MYGKSPALVLPLLLSLQLTALCPTEAVEIYTSGALEAVNGTDVRLKCTFSSFAPVGDALTVTWNFRPRDGGREQFVFYYHMDPFRPMSGRFKDRVVWDGNPERYDVSILLWKLQFDDNGTYTCQVKNPPDVDGLVGTIRLSVVHTVPFSEIYFLAVAIGSACALMIIVVIVVVLFQHFRKKRWADRADKAEGTKSKEEEKLNQGNKVSVFVEDTD.

The first 26 residues, 1–26, serve as a signal peptide directing secretion; the sequence is MYGKSPALVLPLLLSLQLTALCPTEA. Residues 27–141 form the Ig-like V-type domain; sequence VEIYTSGALE…DGLVGTIRLS (115 aa). At 27-154 the chain is on the extracellular side; the sequence is VEIYTSGALE…TVPFSEIYFL (128 aa). N39 and N118 each carry an N-linked (GlcNAc...) asparagine glycan. A disulfide bond links C47 and C123. The chain crosses the membrane as a helical span at residues 155 to 175; that stretch reads AVAIGSACALMIIVVIVVVLF. Residues 176–215 are Cytoplasmic-facing; it reads QHFRKKRWADRADKAEGTKSKEEEKLNQGNKVSVFVEDTD. Residues 187 to 201 show a composition bias toward basic and acidic residues; the sequence is ADKAEGTKSKEEEKL. The tract at residues 187 to 215 is disordered; the sequence is ADKAEGTKSKEEEKLNQGNKVSVFVEDTD.

The protein belongs to the myelin P0 protein family. As to expression, widely expressed. Expressed in the cochlea, in Deiters' cells, possibly at contact sites with the basilar membrane. Expressed in both outer and inner auditory hair cells. In the stria vascularis, detected in the basal cell layer. Not detected in thymocytes, lymphocytes, macrophage or dendritic cells.

It is found in the membrane. In terms of biological role, mediates homophilic cell-cell adhesion. This chain is Myelin protein zero-like protein 2 (Mpzl2), found in Mus musculus (Mouse).